Reading from the N-terminus, the 239-residue chain is Venom nerve growth factor (239 aa).

The N-terminal stretch at 1 to 18 is a signal peptide; the sequence is MSMLCYTLIIAFLIGIWA. The propeptide occupies 19 to 125; sequence APKSEDNVPL…ALNRNIQAKR (107 aa). Over residues 47 to 66 the composition is skewed to basic and acidic residues; it reads GLKTSRNTDQRHPAPKKADD. The segment at 47–68 is disordered; sequence GLKTSRNTDQRHPAPKKADDQE. Cystine bridges form between Cys139–Cys203, Cys181–Cys231, and Cys191–Cys233.

This sequence belongs to the NGF-beta family. As to quaternary structure, homodimer; non-covalently linked. Expressed by the venom gland.

Its subcellular location is the secreted. Its function is as follows. Nerve growth factor is important for the development and maintenance of the sympathetic and sensory nervous systems. It stimulates division and differentiation of sympathetic and embryonic sensory neurons as well as basal forebrain cholinergic neurons in the brain. Its relevance in the snake venom is not clear. However, it has been shown to inhibit metalloproteinase-dependent proteolysis of platelet glycoprotein Ib alpha, suggesting a metalloproteinase inhibition to prevent metalloprotease autodigestion and/or protection against prey proteases. Binds a lipid between the two protein chains in the homodimer. The lipid-bound form promotes histamine relase from mouse mast cells, contrary to the lipid-free form. The chain is Venom nerve growth factor from Pseudechis porphyriacus (Red-bellied black snake).